The primary structure comprises 233 residues: uncharacterized protein (233 aa).

The interval 196 to 212 is the nascent chain stimulates ribosomal stalling during translation by interfering with the conformation of the peptidyl transferase center (PTC), and the translating mRNA by adopting a difficult-to-decode structure at the ribosome decoding center; sequence FFYEDYLIFDCRAKRRK.

In terms of biological role, acts as an endogenous target of the ribosome quality control (RQC) pathway. During translation, the nascent chain has a propensity to stall ribosomes, thereby stimulating activation of the RQC pathway. This is an uncharacterized protein from Saccharomyces cerevisiae (strain ATCC 204508 / S288c) (Baker's yeast).